The sequence spans 610 residues: Transcription termination factor Rho (610 aa).

Positions glutamate 117–glutamine 227 are disordered. Residues valine 118–aspartate 131 show a composition bias toward basic and acidic residues. Positions glycine 178–glutamine 187 are enriched in polar residues. Basic and acidic residues predominate over residues arginine 189 to glutamine 198. Basic residues predominate over residues glycine 199 to glycine 214. The span at glutamate 215–glutamine 227 shows a compositional bias: basic and acidic residues. The region spanning valine 231–serine 309 is the Rho RNA-BD domain. ATP-binding positions include glycine 352–alanine 357, lysine 364–threonine 369, and arginine 395.

The protein belongs to the Rho family. As to quaternary structure, homohexamer. The homohexamer assembles into an open ring structure.

In terms of biological role, facilitates transcription termination by a mechanism that involves Rho binding to the nascent RNA, activation of Rho's RNA-dependent ATPase activity, and release of the mRNA from the DNA template. In Mycobacterium leprae (strain TN), this protein is Transcription termination factor Rho.